The following is a 105-amino-acid chain: Secreted RxLR effector protein 158 (105 aa).

Residues methionine 1–glycine 22 form the signal peptide. Positions arginine 50 to arginine 71 match the RxLR-dEER motif.

The protein belongs to the RxLR effector family.

It localises to the secreted. The protein resides in the host nucleus. Its subcellular location is the host cytoplasm. Functionally, secreted effector that partially suppresses the host cell death induced by cell death-inducing proteins. The polypeptide is Secreted RxLR effector protein 158 (Plasmopara viticola (Downy mildew of grapevine)).